We begin with the raw amino-acid sequence, 232 residues long: Adenosylcobinamide-GDP ribazoletransferase (232 aa).

6 consecutive transmembrane segments (helical) span residues 32 to 52 (PIYF…GGSF), 54 to 74 (NFLL…LFHF), 102 to 122 (VGPF…TLYL), 126 to 146 (PITF…LMFF), 172 to 192 (FFLL…VVTV), and 212 to 232 (DVLG…LGVV).

Belongs to the CobS family. The cofactor is Mg(2+).

The protein localises to the cell inner membrane. It carries out the reaction alpha-ribazole + adenosylcob(III)inamide-GDP = adenosylcob(III)alamin + GMP + H(+). The enzyme catalyses alpha-ribazole 5'-phosphate + adenosylcob(III)inamide-GDP = adenosylcob(III)alamin 5'-phosphate + GMP + H(+). Its pathway is cofactor biosynthesis; adenosylcobalamin biosynthesis; adenosylcobalamin from cob(II)yrinate a,c-diamide: step 7/7. Joins adenosylcobinamide-GDP and alpha-ribazole to generate adenosylcobalamin (Ado-cobalamin). Also synthesizes adenosylcobalamin 5'-phosphate from adenosylcobinamide-GDP and alpha-ribazole 5'-phosphate. This is Adenosylcobinamide-GDP ribazoletransferase from Thermosipho melanesiensis (strain DSM 12029 / CIP 104789 / BI429).